The sequence spans 532 residues: 2,3-bisphosphoglycerate-independent phosphoglycerate mutase (532 aa).

Mn(2+) is bound by residues aspartate 15 and serine 65. Serine 65 acts as the Phosphoserine intermediate in catalysis. Residues histidine 126, 156-157 (RD), arginine 188, arginine 194, 258-261 (RPDR), and lysine 331 contribute to the substrate site. Positions 398, 402, 439, 440, and 457 each coordinate Mn(2+).

This sequence belongs to the BPG-independent phosphoglycerate mutase family. As to quaternary structure, monomer. Mn(2+) serves as cofactor.

It catalyses the reaction (2R)-2-phosphoglycerate = (2R)-3-phosphoglycerate. It participates in carbohydrate degradation; glycolysis; pyruvate from D-glyceraldehyde 3-phosphate: step 3/5. In terms of biological role, catalyzes the interconversion of 2-phosphoglycerate and 3-phosphoglycerate. The protein is 2,3-bisphosphoglycerate-independent phosphoglycerate mutase of Synechococcus elongatus (strain ATCC 33912 / PCC 7942 / FACHB-805) (Anacystis nidulans R2).